We begin with the raw amino-acid sequence, 244 residues long: Membrane-spanning 4-domains subfamily A member 6B (244 aa).

Topologically, residues 1 to 46 (MIPQVVTSETVAMISPNGMSLPQTDKPQPFHQWQDSLKKHLKAEIK) are cytoplasmic. The chain crosses the membrane as a helical span at residues 47 to 67 (VMAAIQIMCAVMVLSLGIILA). Over 68–84 (SVPSNLHFTSVFSVLLK) the chain is Extracellular. A helical membrane pass occupies residues 85 to 105 (SGYPFIGALFFIVSGILSIVT). The Cytoplasmic portion of the chain corresponds to 106 to 121 (ETKSTKILVDSSLTLN). The chain crosses the membrane as a helical span at residues 122–142 (ILSVSFAFMGIIIISVSLAGL). Residues 143–176 (HPASEQCLQSKELRPTEYHYYQFLDRNECFAAKS) lie on the Extracellular side of the membrane. A helical membrane pass occupies residues 177–197 (VLAGVFSLMLISTMLELGLAV). The Cytoplasmic segment spans residues 198–244 (LTAMLWWKQSHSNIPGNVMFLPHSSNNDSNMESKVLCNPSYEEQLVC).

It belongs to the MS4A family. As to expression, expressed at high levels in thymus, spleen, and peripheral lymph nodes, with less abundant levels in non-lymphoid tissues.

Its subcellular location is the membrane. Its function is as follows. May be involved in signal transduction as a component of a multimeric receptor complex. This Mus musculus (Mouse) protein is Membrane-spanning 4-domains subfamily A member 6B (Ms4a6b).